The following is a 72-amino-acid chain: Translation initiation factor IF-1 (72 aa).

An S1-like domain is found at 1–72 (MAKEDVIEIE…TRGRITYRFK (72 aa)).

The protein belongs to the IF-1 family. As to quaternary structure, component of the 30S ribosomal translation pre-initiation complex which assembles on the 30S ribosome in the order IF-2 and IF-3, IF-1 and N-formylmethionyl-tRNA(fMet); mRNA recruitment can occur at any time during PIC assembly.

Its subcellular location is the cytoplasm. One of the essential components for the initiation of protein synthesis. Stabilizes the binding of IF-2 and IF-3 on the 30S subunit to which N-formylmethionyl-tRNA(fMet) subsequently binds. Helps modulate mRNA selection, yielding the 30S pre-initiation complex (PIC). Upon addition of the 50S ribosomal subunit IF-1, IF-2 and IF-3 are released leaving the mature 70S translation initiation complex. The polypeptide is Translation initiation factor IF-1 (Streptococcus agalactiae serotype Ia (strain ATCC 27591 / A909 / CDC SS700)).